Consider the following 344-residue polypeptide: MKERLQQLQQEALEKIEQANDLKALNDVRVAYLGKKGPITEVLRGMGALSPEERPIMGALVNDVREAIQQALEAKQATLEQAEVEKKLAAEAIDVTLPGRPIRRGNHHPLTRVIEEIEDLFIGMGYTIAEGPEVEQDYYNFEALNLPKGHPARDMQDSFYITEEILLRTHTSPVQARTMEKHQGRGPVKIICPGKVYRRDNDDATHSHQFTQIEGLVVDENIRMSDLKGTLREFARKMFGEDRDIRFRPSFFPFTEPSVEVDVSCFNCGGHGCNVCKGTGWIEILGAGMVHPNVLEMAGFDSKKYTGFAFGMGPERIAMLKYGIDDIRHFYQNDLRFLQQFNRV.

E256 provides a ligand contact to Mg(2+).

Belongs to the class-II aminoacyl-tRNA synthetase family. Phe-tRNA synthetase alpha subunit type 1 subfamily. As to quaternary structure, tetramer of two alpha and two beta subunits. The cofactor is Mg(2+).

The protein localises to the cytoplasm. The catalysed reaction is tRNA(Phe) + L-phenylalanine + ATP = L-phenylalanyl-tRNA(Phe) + AMP + diphosphate + H(+). In Anoxybacillus flavithermus (strain DSM 21510 / WK1), this protein is Phenylalanine--tRNA ligase alpha subunit.